Here is a 702-residue protein sequence, read N- to C-terminus: Soluble guanylate cyclase gcy-31 (702 aa).

His104 is a binding site for heme. The stretch at 368-406 (TQQSAELKLLLHQEAQKSRNMRENMNRLKKERRRTDKLL) forms a coiled coil. The region spanning 435 to 564 (TILFTDIVEF…ETVYVANKME (130 aa)) is the Guanylate cyclase domain. Residues Asp440 and Asp484 each coordinate Mg(2+). Residues 614-702 (RHGPHRVPSP…QDLTPRKSIT (89 aa)) form a disordered region. The segment covering 633–643 (SQTEDDDDDEL) has biased composition (acidic residues). Over residues 683–695 (RNSNKTPRQSQDL) the composition is skewed to polar residues.

This sequence belongs to the adenylyl cyclase class-4/guanylyl cyclase family. As to quaternary structure, heterodimer; with other soluble guanylate cyclases. Requires heme as cofactor. In terms of tissue distribution, expressed in a pair of bilaterally symmetric neurons in the head.

The protein resides in the cytoplasm. It catalyses the reaction GTP = 3',5'-cyclic GMP + diphosphate. Its activity is regulated as follows. May be regulated by molecular oxygen. Probably not activated by nitric oxide (NO). Synthesizes cyclic GMP (cGMP) from GTP. May play a role in embryogenesis. The chain is Soluble guanylate cyclase gcy-31 (gcy-31) from Caenorhabditis elegans.